Consider the following 141-residue polypeptide: VLSPADKSNVKAAWDKVGGSAGDYGAEALERMFLSFPTTKTYFPHFDLSHGSAQVKGHGKKVGDALGNAVAHLDDLPGALSALSDLHAHKLRVDPVNFKLLSHCLLVTVACHHPNDFTPAVHASLDKFLANVSTVLVSKYR.

The Globin domain maps to 1-141 (VLSPADKSNV…VSTVLVSKYR (141 aa)). The residue at position 3 (Ser3) is a Phosphoserine. Lys7 and Lys11 each carry N6-succinyllysine. Lys16 is modified (N6-acetyllysine; alternate). Residue Lys16 is modified to N6-succinyllysine; alternate. Phosphotyrosine is present on Tyr24. A Phosphoserine modification is found at Ser35. Lys40 bears the N6-succinyllysine mark. Ser49 carries the post-translational modification Phosphoserine. His58 lines the O2 pocket. His87 serves as a coordination point for heme b. The residue at position 102 (Ser102) is a Phosphoserine. Thr108 carries the phosphothreonine modification. Ser124 is modified (phosphoserine). Thr134 is subject to Phosphothreonine. A Phosphoserine modification is found at Ser138.

It belongs to the globin family. Heterotetramer of two alpha chains and two beta chains. In terms of tissue distribution, red blood cells.

Involved in oxygen transport from the lung to the various peripheral tissues. In terms of biological role, hemopressin acts as an antagonist peptide of the cannabinoid receptor CNR1. Hemopressin-binding efficiently blocks cannabinoid receptor CNR1 and subsequent signaling. The sequence is that of Hemoglobin subunit alpha (HBA) from Chalinolobus morio (Chocolate-wattled bat).